The chain runs to 340 residues: DNA-directed RNA polymerase subunit alpha (340 aa).

The segment at 1-233 (MYRNWRDLIS…EQLSIFINFD (233 aa)) is alpha N-terminal domain (alpha-NTD). The segment at 251 to 340 (VNENLYRSVD…RIRGERKDEE (90 aa)) is alpha C-terminal domain (alpha-CTD).

Belongs to the RNA polymerase alpha chain family. Homodimer. The RNAP catalytic core consists of 2 alpha, 1 beta, 1 beta' and 1 omega subunit. When a sigma factor is associated with the core the holoenzyme is formed, which can initiate transcription.

The catalysed reaction is RNA(n) + a ribonucleoside 5'-triphosphate = RNA(n+1) + diphosphate. Its function is as follows. DNA-dependent RNA polymerase catalyzes the transcription of DNA into RNA using the four ribonucleoside triphosphates as substrates. The sequence is that of DNA-directed RNA polymerase subunit alpha from Geobacter metallireducens (strain ATCC 53774 / DSM 7210 / GS-15).